Reading from the N-terminus, the 436-residue chain is Protein GOLM2 (436 aa).

At Met-1 the chain carries N-acetylmethionine. Residues 1–14 (MVGFGANRRAGRLP) lie on the Cytoplasmic side of the membrane. Residues 15 to 35 (SLVLVVLLVVIVVLAFNYWSI) form a helical; Signal-anchor for type II membrane protein membrane-spanning segment. Residues 35–195 (ISSRHVLLQE…QFLQEQKQEA (161 aa)) adopt a coiled-coil conformation. The Lumenal segment spans residues 36–436 (SSRHVLLQEE…YGKQHFNDVL (401 aa)). Basic and acidic residues-rich tracts occupy residues 193–207 (QEAH…KELD) and 224–247 (VADK…KRGG). The interval 193-436 (QEAHKIQSND…YGKQHFNDVL (244 aa)) is disordered. Phosphoserine is present on residues Ser-233 and Ser-275. 2 stretches are compositionally biased toward polar residues: residues 275-295 (SVSQ…QPLS) and 305-321 (NHNG…SSPL). Ser-328 and Ser-332 each carry phosphoserine. The segment covering 344-362 (ATKDRVSDFHKLKQSRFFD) has biased composition (basic and acidic residues). Position 366 is a phosphoserine (Ser-366). Residues 399 to 418 (YNEEEDGDGGEEDVQDDEER) show a composition bias toward acidic residues. Positions 426-436 (DYGKQHFNDVL) are enriched in basic and acidic residues.

This sequence belongs to the GOLM family.

The protein resides in the membrane. This Pongo abelii (Sumatran orangutan) protein is Protein GOLM2 (GOLM2).